Consider the following 205-residue polypeptide: LexA repressor (205 aa).

A DNA-binding region (H-T-H motif) is located at residues R28–K48. Residues S122 and K159 each act as for autocatalytic cleavage activity in the active site.

This sequence belongs to the peptidase S24 family. In terms of assembly, homodimer.

The catalysed reaction is Hydrolysis of Ala-|-Gly bond in repressor LexA.. In terms of biological role, represses a number of genes involved in the response to DNA damage (SOS response), including recA and lexA. In the presence of single-stranded DNA, RecA interacts with LexA causing an autocatalytic cleavage which disrupts the DNA-binding part of LexA, leading to derepression of the SOS regulon and eventually DNA repair. The protein is LexA repressor of Shewanella loihica (strain ATCC BAA-1088 / PV-4).